Reading from the N-terminus, the 70-residue chain is Large ribosomal subunit protein bL31 (70 aa).

4 residues coordinate Zn(2+): Cys-16, Cys-18, Cys-37, and Cys-40.

The protein belongs to the bacterial ribosomal protein bL31 family. Type A subfamily. In terms of assembly, part of the 50S ribosomal subunit. Requires Zn(2+) as cofactor.

Its function is as follows. Binds the 23S rRNA. In Pasteurella multocida (strain Pm70), this protein is Large ribosomal subunit protein bL31.